We begin with the raw amino-acid sequence, 347 residues long: NADH-ubiquinone oxidoreductase chain 2 (347 aa).

Helical transmembrane passes span Pro3–Ser23, His25–Met45, Tyr59–Met79, Ile96–Pro116, Ile122–Leu142, Val148–Gly168, Ile178–Pro198, Leu202–Ala222, Ile240–Phe260, Ile276–Leu296, and Leu326–Leu346.

This sequence belongs to the complex I subunit 2 family. Core subunit of respiratory chain NADH dehydrogenase (Complex I) which is composed of 45 different subunits. Interacts with TMEM242.

It is found in the mitochondrion inner membrane. The enzyme catalyses a ubiquinone + NADH + 5 H(+)(in) = a ubiquinol + NAD(+) + 4 H(+)(out). Functionally, core subunit of the mitochondrial membrane respiratory chain NADH dehydrogenase (Complex I) which catalyzes electron transfer from NADH through the respiratory chain, using ubiquinone as an electron acceptor. Essential for the catalytic activity and assembly of complex I. The protein is NADH-ubiquinone oxidoreductase chain 2 of Peropteryx kappleri (Greater dog-like bat).